The sequence spans 559 residues: 2-succinyl-5-enolpyruvyl-6-hydroxy-3-cyclohexene-1-carboxylate synthase (559 aa).

It belongs to the TPP enzyme family. MenD subfamily. Homodimer. Requires Mg(2+) as cofactor. It depends on Mn(2+) as a cofactor. The cofactor is thiamine diphosphate.

The enzyme catalyses isochorismate + 2-oxoglutarate + H(+) = 5-enolpyruvoyl-6-hydroxy-2-succinyl-cyclohex-3-ene-1-carboxylate + CO2. It functions in the pathway quinol/quinone metabolism; 1,4-dihydroxy-2-naphthoate biosynthesis; 1,4-dihydroxy-2-naphthoate from chorismate: step 2/7. The protein operates within quinol/quinone metabolism; menaquinone biosynthesis. Catalyzes the thiamine diphosphate-dependent decarboxylation of 2-oxoglutarate and the subsequent addition of the resulting succinic semialdehyde-thiamine pyrophosphate anion to isochorismate to yield 2-succinyl-5-enolpyruvyl-6-hydroxy-3-cyclohexene-1-carboxylate (SEPHCHC). This chain is 2-succinyl-5-enolpyruvyl-6-hydroxy-3-cyclohexene-1-carboxylate synthase, found in Edwardsiella ictaluri (strain 93-146).